Reading from the N-terminus, the 1370-residue chain is DNA-directed RNA polymerase subunit beta (1370 aa).

Belongs to the RNA polymerase beta chain family. The RNAP catalytic core consists of 2 alpha, 1 beta, 1 beta' and 1 omega subunit. When a sigma factor is associated with the core the holoenzyme is formed, which can initiate transcription.

The catalysed reaction is RNA(n) + a ribonucleoside 5'-triphosphate = RNA(n+1) + diphosphate. Its function is as follows. DNA-dependent RNA polymerase catalyzes the transcription of DNA into RNA using the four ribonucleoside triphosphates as substrates. The protein is DNA-directed RNA polymerase subunit beta of Geotalea daltonii (strain DSM 22248 / JCM 15807 / FRC-32) (Geobacter daltonii).